Reading from the N-terminus, the 201-residue chain is Ciliary microtubule inner protein 2C (201 aa).

Belongs to the CIMIP2 family. As to quaternary structure, microtubule inner protein component of sperm flagellar doublet microtubules.

It is found in the cytoplasm. Its subcellular location is the cytoskeleton. The protein resides in the cilium axoneme. It localises to the flagellum axoneme. Its function is as follows. Microtubule inner protein (MIP) part of the dynein-decorated doublet microtubules (DMTs) in cilia axoneme, which is required for motile cilia beating. Binds to the intra-tubulin interfaces. This chain is Ciliary microtubule inner protein 2C (CIMIP2C), found in Bos taurus (Bovine).